A 1372-amino-acid polypeptide reads, in one-letter code: Collagen alpha-2(I) chain (1372 aa).

The signal sequence occupies residues methionine 1–cysteine 22. Glutamine 23 bears the Pyrrolidone carboxylic acid mark. Positions glutamine 23–alanine 85 are cleaved as a propeptide — N-terminal propeptide. Positions glycine 28–arginine 1135 are disordered. Residues methionine 59–proline 77 are compositionally biased toward pro residues. At lysine 90 the chain carries Allysine. A compositionally biased stretch (low complexity) spans glycine 95–lysine 146. Residues alanine 147–glutamate 161 show a composition bias toward basic and acidic residues. At lysine 183 the chain carries 5-hydroxylysine; alternate. O-linked (Gal...) hydroxylysine; alternate glycosylation occurs at lysine 183. Composition is skewed to low complexity over residues valine 231–proline 260, alanine 285–proline 299, proline 306–proline 327, proline 336–valine 351, proline 390–alanine 416, leucine 476–alanine 495, and proline 519–glutamine 537. A compositionally biased stretch (gly residues) spans glycine 544–glycine 553. Positions proline 600–alanine 639 are enriched in low complexity. The segment covering glycine 640 to glycine 649 has biased composition (gly residues). Low complexity-rich tracts occupy residues arginine 681 to serine 716 and proline 725 to alanine 743. The span at lysine 744 to lysine 753 shows a compositional bias: basic and acidic residues. Residues glutamate 755–serine 771 show a composition bias toward low complexity. Residues glycine 781–glycine 790 are compositionally biased toward gly residues. Composition is skewed to low complexity over residues threonine 792 to threonine 801, serine 855 to proline 882, isoleucine 905 to proline 927, proline 957 to alanine 978, and proline 987 to proline 1007. The span at arginine 1011–histidine 1022 shows a compositional bias: basic and acidic residues. The segment covering alanine 1095–proline 1107 has biased composition (pro residues). Residues aspartate 1126 to lysine 1372 constitute a propeptide, C-terminal propeptide. Positions tyrosine 1139–lysine 1372 constitute a Fibrillar collagen NC1 domain. 3 disulfides stabilise this stretch: cysteine 1169–cysteine 1201, cysteine 1209–cysteine 1370, and cysteine 1278–cysteine 1323. Ca(2+) is bound by residues aspartate 1187, asparagine 1189, glutamine 1190, cysteine 1192, and aspartate 1195. N-linked (GlcNAc...) asparagine glycosylation occurs at asparagine 1273.

This sequence belongs to the fibrillar collagen family. As to quaternary structure, trimers of one alpha 2(I) and two alpha 1(I) chains. Interacts (via C-terminus) with TMEM131 (via PapD-L domain); the interaction is direct and is involved in assembly and TRAPPIII ER-to-Golgi transport complex-dependent secretion of collagen. Post-translationally, prolines at the third position of the tripeptide repeating unit (G-X-Y) are hydroxylated in some or all of the chains. As to expression, expressed in kidney glomeruli.

The protein resides in the secreted. It localises to the extracellular space. The protein localises to the extracellular matrix. In terms of biological role, type I collagen is a member of group I collagen (fibrillar forming collagen). The sequence is that of Collagen alpha-2(I) chain (Col1a2) from Mus musculus (Mouse).